Here is a 101-residue protein sequence, read N- to C-terminus: MAKLALIEREKKRAKLAAKFAPKRAALKAIIDDQEKSEEERYMARLELQQLPRNANPTRQRNRCAITGRPRGTFRKFGLARNKIREIAFKGEIPGLTKASW.

This sequence belongs to the universal ribosomal protein uS14 family. In terms of assembly, part of the 30S ribosomal subunit. Contacts proteins S3 and S10.

Functionally, binds 16S rRNA, required for the assembly of 30S particles and may also be responsible for determining the conformation of the 16S rRNA at the A site. In Cupriavidus pinatubonensis (strain JMP 134 / LMG 1197) (Cupriavidus necator (strain JMP 134)), this protein is Small ribosomal subunit protein uS14.